The chain runs to 127 residues: Aspartate 1-decarboxylase (127 aa).

The active-site Schiff-base intermediate with substrate; via pyruvic acid is S25. Residue S25 is modified to Pyruvic acid (Ser). T57 contributes to the substrate binding site. Y58 acts as the Proton donor in catalysis. Residue 73 to 75 (GAA) coordinates substrate.

The protein belongs to the PanD family. Heterooctamer of four alpha and four beta subunits. The cofactor is pyruvate. In terms of processing, is synthesized initially as an inactive proenzyme, which is activated by self-cleavage at a specific serine bond to produce a beta-subunit with a hydroxyl group at its C-terminus and an alpha-subunit with a pyruvoyl group at its N-terminus.

The protein resides in the cytoplasm. The enzyme catalyses L-aspartate + H(+) = beta-alanine + CO2. Its pathway is cofactor biosynthesis; (R)-pantothenate biosynthesis; beta-alanine from L-aspartate: step 1/1. Its function is as follows. Catalyzes the pyruvoyl-dependent decarboxylation of aspartate to produce beta-alanine. The protein is Aspartate 1-decarboxylase of Clostridium kluyveri (strain NBRC 12016).